We begin with the raw amino-acid sequence, 198 residues long: Glycerol-3-phosphate acyltransferase (198 aa).

Helical transmembrane passes span 3 to 23, 81 to 101, 113 to 133, and 153 to 175; these read VEWLLIPFAYLLGSVSSAVIV, LFAAIGFAAFVGHLYPVFFQF, VLLGFAWPVGLMALLTWIGVA, and YVWLWLGSAELVVATLFMSMLLV.

The protein belongs to the PlsY family. Probably interacts with PlsX.

The protein localises to the cell inner membrane. It catalyses the reaction an acyl phosphate + sn-glycerol 3-phosphate = a 1-acyl-sn-glycero-3-phosphate + phosphate. Its pathway is lipid metabolism; phospholipid metabolism. Its function is as follows. Catalyzes the transfer of an acyl group from acyl-phosphate (acyl-PO(4)) to glycerol-3-phosphate (G3P) to form lysophosphatidic acid (LPA). This enzyme utilizes acyl-phosphate as fatty acyl donor, but not acyl-CoA or acyl-ACP. This Methylococcus capsulatus (strain ATCC 33009 / NCIMB 11132 / Bath) protein is Glycerol-3-phosphate acyltransferase.